A 411-amino-acid polypeptide reads, in one-letter code: Putative metal tolerance protein C3 (411 aa).

Residues 1–115 lie on the Cytoplasmic side of the membrane; the sequence is MEVNYCPETP…DRAERAAQEL (115 aa). The chain crosses the membrane as a helical span at residues 116–136; sequence AMQISNWANIFLLALKIYATV. At 137-140 the chain is on the vacuolar side; the sequence is KSGS. The helical transmembrane segment at 141–161 threads the bilayer; the sequence is IAIAASTLDSLLDLMAGGILW. Residues 162-184 lie on the Cytoplasmic side of the membrane; sequence FTHLSMKNVNIYKYPIGKLRVQP. A helical membrane pass occupies residues 185-205; it reads VGIIIFAAVMATLGFQVLLVA. Residues 206 to 222 lie on the Vacuolar side of the membrane; the sequence is AEQLISNEPSEKMNHVQ. Residues 223–243 form a helical membrane-spanning segment; sequence LIWLYSIMLSATAIKLVLWIY. The Cytoplasmic segment spans residues 244–262; the sequence is CKSSRNHIVRAYAKDHHFD. The helical transmembrane segment at 263–283 threads the bilayer; the sequence is VVTNVLGLVAAVLANAFYWWL. Residues 284-287 are Vacuolar-facing; it reads DPTG. Residues 288–308 form a helical membrane-spanning segment; sequence AILLAIYTIVNWSGTVMENAV. The Cytoplasmic portion of the chain corresponds to 309 to 390; that stretch reads SLIGQSAPPE…LPEVERAFVH (82 aa).

Belongs to the cation diffusion facilitator (CDF) transporter (TC 2.A.4) family.

It localises to the vacuole membrane. Its function is as follows. Involved in sequestration of excess metal in the cytoplasm into vacuoles to maintain metal homeostasis. The sequence is that of Putative metal tolerance protein C3 (MTPC3) from Arabidopsis thaliana (Mouse-ear cress).